Here is a 411-residue protein sequence, read N- to C-terminus: Tetra-peptide repeat homeobox protein 1 (411 aa).

Positions 3 to 24 (SLREQQLQVWFKNRRAKLARER) form a DNA-binding region, homeobox. 4 disordered regions span residues 20-63 (LARE…SGIL), 88-246 (IPAA…ISGP), 286-340 (PILS…SPDA), and 363-411 (LEGS…LLDL). Positions 27–55 (QQQPQRVPGQRGRGARAAPLVPAASASAP) are enriched in low complexity. Pro residues-rich tracts occupy residues 95-139 (GPGP…PGPI) and 149-246 (FRGP…ISGP). The segment covering 295 to 307 (SPGSLPGLAPILG) has biased composition (low complexity). Pro residues predominate over residues 319–335 (APIPGPGSLPAPAPLWP). Polar residues-rich tracts occupy residues 366-376 (SSVSTMTSQYQ) and 388-402 (GSQPQEEGGSVNENH).

This sequence belongs to the paired homeobox family.

The protein localises to the nucleus. Transcription factor expressed after fertilization required for zygotic genome activation (ZGA), a critical event in early embryonic development during which the developmental control passes from maternally provided mRNAs to the expression of the zygotic genome after fertilization. Binds and activates expression of key ZGA marker genes, such as NANOGNB, ZSCAN4, DUXB, KLF5 and DPPA3. Binds to regulatory DNA sequences containing a 5'-TAATCC-3' sequence motif. The polypeptide is Tetra-peptide repeat homeobox protein 1 (Homo sapiens (Human)).